The primary structure comprises 499 residues: Uridine-cytidine kinase A (499 aa).

Residues 1–44 (MSDNSTTKVTTNDSPSLTTTTSTTTAPTTTTTTTTTPTHNHDTT) form a disordered region. Residues 10–38 (TTNDSPSLTTTTSTTTAPTTTTTTTTTPT) show a composition bias toward low complexity. Residue 78-85 (GGSASGKT) participates in ATP binding.

This sequence belongs to the uridine kinase family.

It carries out the reaction uridine + ATP = UMP + ADP + H(+). The enzyme catalyses cytidine + ATP = CMP + ADP + H(+). It functions in the pathway pyrimidine metabolism; CTP biosynthesis via salvage pathway; CTP from cytidine: step 1/3. It participates in pyrimidine metabolism; UMP biosynthesis via salvage pathway; UMP from uridine: step 1/1. Functionally, catalyzes the conversion of uridine into uridine monophosphate and cytidine into cytidine monophosphate in the pyrimidine salvage pathway. The protein is Uridine-cytidine kinase A (udkA) of Dictyostelium discoideum (Social amoeba).